The following is a 203-amino-acid chain: Glycerol-3-phosphate acyltransferase (203 aa).

4 helical membrane passes run 4 to 24 (LALIMTMAAYLLGSISSAVLI), 68 to 88 (IPVWGGYFLGIDPIILGVIAI), 117 to 137 (PIGLDLTGLVMLTWLSVAVLF), and 155 to 175 (TWMFKPQYTLPVAMLCCLIVF).

This sequence belongs to the PlsY family. Probably interacts with PlsX.

The protein resides in the cell inner membrane. It carries out the reaction an acyl phosphate + sn-glycerol 3-phosphate = a 1-acyl-sn-glycero-3-phosphate + phosphate. Its pathway is lipid metabolism; phospholipid metabolism. Its function is as follows. Catalyzes the transfer of an acyl group from acyl-phosphate (acyl-PO(4)) to glycerol-3-phosphate (G3P) to form lysophosphatidic acid (LPA). This enzyme utilizes acyl-phosphate as fatty acyl donor, but not acyl-CoA or acyl-ACP. The chain is Glycerol-3-phosphate acyltransferase from Vibrio campbellii (strain ATCC BAA-1116).